Here is a 352-residue protein sequence, read N- to C-terminus: ER-derived vesicles protein ERV41 (352 aa).

The Cytoplasmic portion of the chain corresponds to 1–23; that stretch reads MAGLKTFDAFPKTEEQYKKKSTK. Residues 24-44 traverse the membrane as a helical segment; sequence GGLTSLLTYLFLLFIAWTEFG. Topologically, residues 45–311 are lumenal; that stretch reads EYFGGYIDQQ…FLVRLVAICS (267 aa). The chain crosses the membrane as a helical span at residues 312–332; sequence FLVYCASWIFTLLDMALITIM. Over 333-352 the chain is Cytoplasmic; that stretch reads GPKWSLRYQPDDKTKGILDR. An Isoleucine-leucine motif motif is present at residues 349-350; it reads IL.

The protein belongs to the ERGIC family. In terms of assembly, interacts with ERV46.

It is found in the endoplasmic reticulum membrane. Its subcellular location is the golgi apparatus membrane. The protein localises to the cytoplasmic vesicle. It localises to the COPII-coated vesicle membrane. In terms of biological role, constituent of COPII-coated endoplasmic reticulum-derived transport vesicles. Required for efficient transport of a subset of secretory proteins to the Golgi. The C-terminal Ile-Leu motif is required for exit from the endoplasmic reticulum. Facilitates retrograde transport from the Golgi to the endoplasmic reticulum. This Saccharomyces cerevisiae (strain ATCC 204508 / S288c) (Baker's yeast) protein is ER-derived vesicles protein ERV41 (ERV41).